Here is a 151-residue protein sequence, read N- to C-terminus: Small ribosomal subunit protein bS6 (151 aa).

Positions 96 to 151 (HEEGQSAMLTRRDDRRERDGDDRPRRREGGFDRGDRGDRGDRGPRRPRDNEAGEGA) are disordered.

This sequence belongs to the bacterial ribosomal protein bS6 family.

Functionally, binds together with bS18 to 16S ribosomal RNA. The polypeptide is Small ribosomal subunit protein bS6 (Brucella anthropi (strain ATCC 49188 / DSM 6882 / CCUG 24695 / JCM 21032 / LMG 3331 / NBRC 15819 / NCTC 12168 / Alc 37) (Ochrobactrum anthropi)).